The primary structure comprises 170 residues: uncharacterized protein (170 aa).

3 consecutive transmembrane segments (helical) span residues 31–51 (ILAV…FYIF), 58–78 (LFLI…LLLF), and 133–153 (IDFI…MLLF).

The protein to M.jannaschii MJ0554 and MJ0587.

Its subcellular location is the cell membrane. This is an uncharacterized protein from Methanocaldococcus jannaschii (strain ATCC 43067 / DSM 2661 / JAL-1 / JCM 10045 / NBRC 100440) (Methanococcus jannaschii).